The following is a 603-amino-acid chain: Proline--tRNA ligase (603 aa).

The protein belongs to the class-II aminoacyl-tRNA synthetase family. ProS type 1 subfamily. Homodimer.

Its subcellular location is the cytoplasm. The enzyme catalyses tRNA(Pro) + L-proline + ATP = L-prolyl-tRNA(Pro) + AMP + diphosphate. Functionally, catalyzes the attachment of proline to tRNA(Pro) in a two-step reaction: proline is first activated by ATP to form Pro-AMP and then transferred to the acceptor end of tRNA(Pro). As ProRS can inadvertently accommodate and process non-cognate amino acids such as alanine and cysteine, to avoid such errors it has two additional distinct editing activities against alanine. One activity is designated as 'pretransfer' editing and involves the tRNA(Pro)-independent hydrolysis of activated Ala-AMP. The other activity is designated 'posttransfer' editing and involves deacylation of mischarged Ala-tRNA(Pro). The misacylated Cys-tRNA(Pro) is not edited by ProRS. In Prochlorococcus marinus (strain SARG / CCMP1375 / SS120), this protein is Proline--tRNA ligase.